A 264-amino-acid chain; its full sequence is Chymotrypsin-like protease CTRL-1 (264 aa).

The first 18 residues, 1-18 (MLLLSLTLSLVLLGSSWG), serve as a signal peptide directing secretion. Residues 19–33 (CGIPAIKPALSFSQR) constitute a propeptide, activation peptide. Cystine bridges form between Cys19–Cys141, Cys60–Cys76, Cys155–Cys220, Cys187–Cys201, and Cys210–Cys239. One can recognise a Peptidase S1 domain in the interval 34–262 (IVNGENAVLG…FSTWINQVIA (229 aa)). His75 (charge relay system) is an active-site residue. N-linked (GlcNAc...) asparagine glycosylation is present at Asn114. Asp121 functions as the Charge relay system in the catalytic mechanism. Catalysis depends on Ser214, which acts as the Charge relay system.

Belongs to the peptidase S1 family.

This Homo sapiens (Human) protein is Chymotrypsin-like protease CTRL-1 (CTRL).